We begin with the raw amino-acid sequence, 612 residues long: Membrane protein insertase YidC (612 aa).

7 helical membrane-spanning segments follow: residues 4-24 (NTIIGFILIFWVLFGFAYLNH), 329-349 (LVPLGWSLFRAINKCLIIPIF), 358-378 (VNLGLAILILTLIIKIALFPL), 434-454 (ILLQMPFLIALFMFFPSAIGL), 484-504 (FLGNHISLFCLLMSLATILNT), 524-544 (LTMYFMPVVMFFFLNSYPAGL), and 546-566 (YYYLISTLITIMQTIIFRGLV).

Belongs to the OXA1/ALB3/YidC family. Type 1 subfamily. In terms of assembly, interacts with the Sec translocase complex via SecD. Specifically interacts with transmembrane segments of nascent integral membrane proteins during membrane integration.

It localises to the cell inner membrane. Its function is as follows. Required for the insertion and/or proper folding and/or complex formation of integral membrane proteins into the membrane. Involved in integration of membrane proteins that insert both dependently and independently of the Sec translocase complex, as well as at least some lipoproteins. Aids folding of multispanning membrane proteins. This Azobacteroides pseudotrichonymphae genomovar. CFP2 protein is Membrane protein insertase YidC.